Consider the following 149-residue polypeptide: MKIIIDGDGCAGRDIIEEVGKKHSVKILIYCTINHMINSDYSEVRMVDGGFQSVDMYVANNTEENDIVITQDYGVAAMALGKGALAISPRGYIYDNDNIDRLLFERHLSQKNRRAGGKSKGNHKRNKEDDDRLYYNLEVLIEKVKAILN.

This sequence belongs to the UPF0178 family.

This Clostridium perfringens (strain ATCC 13124 / DSM 756 / JCM 1290 / NCIMB 6125 / NCTC 8237 / Type A) protein is UPF0178 protein CPF_2548.